The primary structure comprises 98 residues: Putative protein p20 (98 aa).

The disordered stretch occupies residues 77–98 (PNPPVEPSSKALSHASPPSVSS).

In Escherichia coli (Bacteriophage APSE-1), this protein is Putative protein p20 (20).